Here is a 1491-residue protein sequence, read N- to C-terminus: MEEPSEPEGLIDWKERCVALEAQLMKFRVQASKIRELLADKMQQLERQVIDAERQAEKAFQEVQVMEEKLKAANIQTSESETRLYKKCQDLESVMQEKDDIIQNLALRLEEQKQVRIQEAKIIEEKAAKIKEWVTVKLNELEVENQNLRFINQTQTEEIRAIQSKLQELQEKKISCVSSPKTSEGQRNLTFGCFLSRAKSPPCVVRCEEVSKMASNEPEITEGRCVEEMEIAEKPADNQVQENSRSQRKLHETSCSSEQNQKTRASFAMDGGTSQNSGVPVSDWSSDEDDGSKGRSKSRCTSTLSSHTSEEGGQCGRLGSEAYLTASDDSSSIFEEETFDGNRPEQKKLCSWQQKAPWKAQGNLAKGRSQSGVKEQDSSSDELNKKFHSQRLDYTSSSSEANTPSPILTPALTPRYPNSLPGKGGAPLVPPPFQPPPKLRVPNVFSISVALTKRHLSQPQLCSDRMFGTNRNAISMIRPLRPQETDLDVVDGDGAEAVNRMDTGCDDGLFSYDSQDPPPCADDQENSEAPKKAPCNKPPTPPLHRFPSWESRIYAVAKSGIRVSEAFNMEHANKNSADILSYSAASLYTSLIYKNMTTPVYTTLKGKATQISSSPFLDDSSGSDEEDSSRSSSRLSESDARSRSGPSSPRAMKRGVSDSSAASESDYAIPPDAYPIDAECSQPEQKLLKTCLASCDNGKNEPLEKSGYLLKMSVRVKTWKRRWFVLKGGELLYYKSPSDVIRKPQGHIELSASCSILRGDNKQTVQLATEKHTYYLTADSPNILEEWIKVLQSVLRVQAANPLCLQPEGKPAVKGLLTKVKHGYSKRVWCMLVGKVLYYFRNQEDKFPLGQLKLWEAKVEEVDRSCDSDEDYETRGCYLLSTHYTIIVHPKDQGPTYLLIGSKHEKEAWLYHLTVAAGSNNINVGSEFEQLVCKLLNIEGEPSSQIWRHPMLCHSKEGILSPLTTLPSEALQTEAIKLFKTCQLFINAAVDSPAIDYHISLAQSALQVCLTHPELQNEICCQLIKQTRRRQLQNQPGPLQGWQLLALCVGLFLPHHPFLWLLQLHLQRNADSRTEFGKYAIYCQRCVERTQQNGDREARPSRMEILSTLLRNPYHHSRPFSIPVHFMNGLYQVVGFDASTTVEEFLNTLNQDTGMRKPAQSGFALFTDDPSGRDLEHCLQGNIKICDIISKWEQASKEQQPGKCEGSRTVRLTYKNRLYFSVQARGETDREKTLLLYQTNDQIINGLFPLNKDLALEMAALLAQVDIGDFERPFSTPAGPVTNQCKANQTLKQVIERFYPKRYREGCSEEQLRQLYQRLSTKWMALRGHSAADCIRIYLTVARKWPFFGAKLFFAKPIAPSSLGNNCVWLAVHENGLSILEYTSMRLVTSYMYKGLMTFGGYQEDFMVVVSTQSKDRPTEKLLFAMAKHKILEITLLIASYINSFHQQKTTFHHLSAPALLSPRTQAPQARVMGSQPPLSNSRPTKGPTLL.

Residues 19–177 (ALEAQLMKFR…ELQEKKISCV (159 aa)) are a coiled coil. Disordered stretches follow at residues 232 to 435 (AEKP…PFQP), 506 to 546 (DDGL…LHRF), and 612 to 668 (SSSP…SDYA). Residues 253 to 264 (TSCSSEQNQKTR) show a composition bias toward polar residues. Residues 374 to 385 (KEQDSSSDELNK) are compositionally biased toward basic and acidic residues. Polar residues predominate over residues 392 to 406 (LDYTSSSSEANTPSP). The segment covering 657–666 (SDSSAASESD) has biased composition (low complexity). PH domains follow at residues 702 to 796 (PLEK…SVLR) and 810 to 918 (KPAV…VAAG). The MyTH4 domain maps to 954–1109 (HSKEGILSPL…PSRMEILSTL (156 aa)). The FERM domain occupies 1120–1449 (FSIPVHFMNG…SYINSFHQQK (330 aa)). The interval 1466–1491 (QAPQARVMGSQPPLSNSRPTKGPTLL) is disordered.

Self-associates. Interacts with TGFB1I1. Expressed in the kidney and testis. Expressed in the kidney exclusively by glomerular podocytes.

The protein resides in the cytoplasm. The protein localises to the cytoskeleton. It is found in the cell membrane. It localises to the cell projection. Its subcellular location is the lamellipodium. In terms of biological role, in the kidney glomerulus may play a role in linking podocyte foot processes to the glomerular basement membrane. May be involved in stabilization of F-actin by attenuating its depolymerization. Can recruit TGFB1I1 from focal adhesions to podocyte lamellipodia. In Mus musculus (Mouse), this protein is Pleckstrin homology domain-containing family H member 2 (Plekhh2).